The primary structure comprises 311 residues: tRNA dimethylallyltransferase (311 aa).

14–21 (GPTAVGKT) contributes to the ATP binding site. Residue 16-21 (TAVGKT) coordinates substrate. Residues 39 to 42 (DSMQ) are interaction with substrate tRNA.

Belongs to the IPP transferase family. Monomer. Mg(2+) is required as a cofactor.

The enzyme catalyses adenosine(37) in tRNA + dimethylallyl diphosphate = N(6)-dimethylallyladenosine(37) in tRNA + diphosphate. Its function is as follows. Catalyzes the transfer of a dimethylallyl group onto the adenine at position 37 in tRNAs that read codons beginning with uridine, leading to the formation of N6-(dimethylallyl)adenosine (i(6)A). This is tRNA dimethylallyltransferase from Lactiplantibacillus plantarum (strain ATCC BAA-793 / NCIMB 8826 / WCFS1) (Lactobacillus plantarum).